A 222-amino-acid chain; its full sequence is Small ribosomal subunit protein uS7m (222 aa).

The protein belongs to the universal ribosomal protein uS7 family. As to quaternary structure, part of the small ribosomal subunit.

It localises to the mitochondrion. One of the primary rRNA binding proteins, it binds directly to 18S rRNA where it nucleates assembly of the head domain of the small subunit. The protein is Small ribosomal subunit protein uS7m (RPS7) of Prototheca wickerhamii.